The chain runs to 555 residues: Formate--tetrahydrofolate ligase (555 aa).

65-72 (TPAGEGKS) contributes to the ATP binding site.

The protein belongs to the formate--tetrahydrofolate ligase family.

It carries out the reaction (6S)-5,6,7,8-tetrahydrofolate + formate + ATP = (6R)-10-formyltetrahydrofolate + ADP + phosphate. Its pathway is one-carbon metabolism; tetrahydrofolate interconversion. In Lactococcus lactis subsp. lactis (strain IL1403) (Streptococcus lactis), this protein is Formate--tetrahydrofolate ligase.